The chain runs to 228 residues: Urease accessory protein UreH (228 aa).

Helical transmembrane passes span 48–68 (VFWG…IILM), 79–99 (SLEF…ILSL), 130–150 (LFIG…LTMS), 162–182 (ILFF…LIGI), and 196–216 (AFIQ…MYNL).

Belongs to the NiCoT transporter (TC 2.A.52) family.

The protein resides in the cell membrane. Functionally, probably facilitates nickel incorporation. May constitute a multicomponent high-affinity nickel transporter. Not essential for the expression of catalytically active urease. The sequence is that of Urease accessory protein UreH (ureH) from Bacillus sp. (strain TB-90).